The sequence spans 500 residues: NF-kappa-B inhibitor epsilon (500 aa).

The span at Met-1–Pro-10 shows a compositional bias: basic and acidic residues. 3 disordered regions span residues Met-1–Ala-66, Leu-84–Ser-215, and Ser-222–Val-241. Residues Ser-157, Ser-161, and Ser-183 each carry the phosphoserine modification. A compositionally biased stretch (low complexity) spans Ser-161–Pro-186. The segment covering Glu-196–Asp-209 has biased composition (basic and acidic residues). ANK repeat units lie at residues Asp-258–Asn-291, Leu-293–Leu-322, His-326–Arg-355, Gln-369–Val-398, Ser-403–Ala-432, and Asn-436–Leu-465.

Belongs to the NF-kappa-B inhibitor family. As to quaternary structure, interacts with RELA, REL, NFKB1 nuclear factor NF-kappa-B p50 subunit and NFKB2 nuclear factor NF-kappa-B p52 subunit. Interacts with HNRNPA2B1; the interaction may be mediated by the RRM2 domain of HNRNPA2B1, and HNRNPA2B1 may interact simultaneously with FAM76B and either NFKBIA or NFKBIE to form a complex. Post-translationally, serine phosphorylated; followed by proteasome-dependent degradation. As to expression, highly expressed in spleen, testis and lung, followed by kidney, pancreas, heart, placenta and brain. Also expressed in granulocytes and macrophages.

It localises to the cytoplasm. Sequesters NF-kappa-B transcription factor complexes in the cytoplasm, thereby inhibiting their activity. Sequestered complexes include NFKB1-RELA (p50-p65) and NFKB1-REL (p50-c-Rel) complexes. Limits B-cell activation in response to pathogens, and also plays an important role in B-cell development. This chain is NF-kappa-B inhibitor epsilon (NFKBIE), found in Homo sapiens (Human).